Reading from the N-terminus, the 180-residue chain is MIIYLHGFDSNSPGNHEKVLQLQFIDPDVRLISYSTRHPKHDMQHLLKEVDKMLQLNVDERPLICGVGLGGYWAERIGFLCDIRQVIFNPNLFPYENMEGKIDRPEEYADIATKCVTNFREKNRDRCLVILSRNDEALNSQRTSEELHHYYEIVWDEEQSHKFKNISPHLQRIKAFKTLG.

Belongs to the UPF0227 family.

This is UPF0227 protein YcfP from Escherichia coli O9:H4 (strain HS).